Reading from the N-terminus, the 371-residue chain is Signal peptide peptidase-like 1 (371 aa).

The Lumenal segment spans residues 1–6 (MESLWK). Residues 7–27 (LSYLLEPASLALILTAVSVAY) traverse the membrane as a helical segment. The Cytoplasmic segment spans residues 28–57 (ASASRALDHGREMERNLDFSEASITLDRSQ). A helical transmembrane segment spans residues 58–75 (ALMIPLASSCSLLLMFYL). Residues 76-80 (FSSVS) are Lumenal-facing. The chain crosses the membrane as a helical span at residues 81–103 (HLVTAFTAVASAMALFFCLSPYV). At 104 to 123 (NCVRSRLGVGDPFVSRCCSK) the chain is on the cytoplasmic side. Residues 124–146 (PFTRLQGLLVAICVGTVVAWLVS) form a helical membrane-spanning segment. Residues 147 to 149 (GHW) are Lumenal-facing. The chain crosses the membrane as a helical span at residues 150–167 (LLNNLLGISICIAFVSHV). The Cytoplasmic segment spans residues 168–171 (RLPN). The chain crosses the membrane as a helical span at residues 172-192 (IKICALLLVCLFVYDVFWVFF). Aspartate 186 is a catalytic residue. The Lumenal segment spans residues 193 to 258 (SERFFGANVM…LAPGSSPGDY (66 aa)). The chain crosses the membrane as a helical span at residues 259–279 (MMLGLGDMAIPGMLLALVLSF). The active site involves aspartate 265. The Cytoplasmic segment spans residues 280 to 301 (DHRKIKDMSVSQDMPPSKQRKY). A helical membrane pass occupies residues 302 to 322 (VWYALTGYGVGLVTALAAGIL). Residues 323 to 326 (SQSP) are Lumenal-facing. Residues 327 to 347 (QPALLYLVPSTLGPVMYMSWL) form a helical membrane-spanning segment. The short motif at 328–330 (PAL) is the PAL element. At 348 to 371 (RNELWELWEGSRPIINDKAHLLEV) the chain is on the cytoplasmic side.

This sequence belongs to the peptidase A22B family.

The protein resides in the endosome membrane. Intramembrane-cleaving aspartic protease (I-CLiP) that cleaves type II membrane signal peptides in the hydrophobic plane of the membrane. The chain is Signal peptide peptidase-like 1 (SPPL1) from Oryza sativa subsp. japonica (Rice).